The primary structure comprises 284 residues: MNIKGSDNGSFIKGSPENDIIDGGKKNDWIDAGNGDDRIKAGDGQDSITAGPGHDIVWAGKGSDVIHADGGDDLLYSDASYPLYVTDPHRVIPHSGEGDDVLYAGPGSDILVAGDGADVLTGGDDGDAFVFRFHDPMVGTTHCYTSVMDFDTKQDRFVLDAADFGGDRNLFDANFINHSKGFPGEFVDTFYNGAAEGAHGEHVVVITDRGFASAAAAATAIDHEARGDIIVFHDQKTLGQDGETHGATLAYVDSANHAHAFAHVDNLHDMSDLTSLTAENFGFI.

The disordered stretch occupies residues Met1 to Asn27. Hemolysin-type calcium-binding repeat units follow at residues Lys13–Ile30, Asp31–Ile48, Trp58–Leu75, His94–Leu111, and Val112–Phe129. Ca(2+) is bound by residues Asp100, Asp109, Asp118, and Asp127. The export signal (aspartic acid box) stretch occupies residues Asp208–Asp222.

Its subcellular location is the secreted. Functionally, the NodO protein may play a role in nodule development by direct interaction with the root hair cells or some other plant surface in a calcium-dependent manner. This chain is Nodulation protein O (nodO), found in Rhizobium leguminosarum bv. viciae.